Consider the following 810-residue polypeptide: Fibroblast growth factor receptor 1-A (810 aa).

A signal peptide spans 1-26 (MKMMMIMKTTLLLISVLLTQALQSQG). At 27–363 (RPAIQDEAPA…TQLPNQTYLE (337 aa)) the chain is on the extracellular side. 3 consecutive Ig-like C2-type domains span residues 28–115 (PAIQ…FNIS), 147–235 (PDKM…YQLD), and 244–346 (PILQ…AWLT). Cysteines 53 and 99 form a disulfide. N-linked (GlcNAc...) asparagine glycans are attached at residues asparagine 107, asparagine 113, asparagine 216, asparagine 229, asparagine 253, asparagine 285, asparagine 306, asparagine 319, and asparagine 358. An intrachain disulfide couples cysteine 167 to cysteine 219. A disulfide bridge connects residues cysteine 266 and cysteine 330. A helical transmembrane segment spans residues 364 to 384 (VLIYCVGFFLICVMVGTAVLA). Over 385–810 (KMHSSAKKSD…PNRGVAFKKR (426 aa)) the chain is Cytoplasmic. Position 450 is a phosphotyrosine; by autocatalysis (tyrosine 450). Residues 465–754 (LVLGKPLGEG…LSMTSNQEYL (290 aa)) enclose the Protein kinase domain. ATP-binding positions include 471–477 (LGEGCFG), lysine 501, 549–551 (EFA), and asparagine 555. A phosphotyrosine; by autocatalysis mark is found at tyrosine 570 and tyrosine 572. Aspartate 610 serves as the catalytic Proton acceptor. The ATP site is built by arginine 614 and aspartate 628. Phosphotyrosine; by autocatalysis occurs at positions 640, 641, 717, and 753. Residues 787–810 (AGADEPCLPKFPPHPNRGVAFKKR) form a disordered region.

The protein belongs to the protein kinase superfamily. Tyr protein kinase family. Fibroblast growth factor receptor subfamily. As to quaternary structure, monomer. Homodimer after ligand binding. Interacts with cnpy1. In terms of processing, autophosphorylated. Binding of FGF family members together with heparan sulfate proteoglycan or heparin promotes receptor dimerization and autophosphorylation on tyrosine residues. Autophosphorylation occurs in trans between the two FGFR molecules present in the dimer and proceeds in a highly ordered manner. Phosphotyrosine residues provide docking sites for interacting proteins and so are crucial for FGFR1 function and its regulation. Post-translationally, ubiquitinated. FGFR1 is rapidly ubiquitinated after autophosphorylation, leading to internalization and degradation. N-glycosylated in the endoplasmic reticulum. The N-glycan chains undergo further maturation to an Endo H-resistant form in the Golgi apparatus. In terms of tissue distribution, initially expressed in adaxial mesoderm with transcripts distinctly localized to the anterior portion of each half-somite. Hereupon, also strongly expressed in the otic vesicles, branchial arches and the brain, especially at the midbrain-hindbrain boundary (MHB).

Its subcellular location is the cell membrane. It localises to the nucleus. The protein localises to the cytoplasm. It is found in the cytosol. The protein resides in the cytoplasmic vesicle. The catalysed reaction is L-tyrosyl-[protein] + ATP = O-phospho-L-tyrosyl-[protein] + ADP + H(+). With respect to regulation, present in an inactive conformation in the absence of bound ligand. Ligand binding leads to dimerization and activation by sequential autophosphorylation on tyrosine residues. In terms of biological role, tyrosine-protein kinase that acts as a cell-surface receptor for fibroblast growth factors and plays an essential role in the regulation of embryonic development, cell proliferation, differentiation and migration. Required for normal mesoderm patterning and normal skeletogenesis. Phosphorylates PLCG1, FRS2, GAB1 and SHB. Ligand binding leads to the activation of several signaling cascades. Activation of PLCG1 leads to the production of the cellular signaling molecules diacylglycerol and inositol-1,4,5-trisphosphate. Phosphorylation of FRS2 triggers recruitment of GRB2, GAB1, PIK3R1 and SOS1, and mediates activation of RAS, MAPK1/ERK2, MAPK3/ERK1 and the MAP kinase signaling pathway, as well as of the AKT1 signaling pathway. Promotes phosphorylation of SHC1, STAT1 and PTPN11/SHP2. In the nucleus, enhances RPS6KA1 and CREB1 activity and contributes to the regulation of transcription. FGFR1 signaling is down-regulated by ubiquitination, internalization and degradation. The sequence is that of Fibroblast growth factor receptor 1-A (fgfr1a) from Danio rerio (Zebrafish).